Reading from the N-terminus, the 972-residue chain is SWI/SNF-related matrix-associated actin-dependent regulator of chromatin subfamily A containing DEAD/H box 1A (972 aa).

Disordered regions lie at residues 15–76 (NAVG…SDLQ), 125–177 (DEDS…EKQE), and 217–333 (SSTD…EDSI). 2 stretches are compositionally biased toward basic and acidic residues: residues 22–42 (KSPD…RKAD) and 63–72 (EVVRMGKDSA). The region spanning 82–127 (DMEDKIIKLLEIFPQKSKKDLLEVIENTSTLDGAVAHCLMIYGDED) is the CUE 1 domain. Positions 128-138 (SGGRKDKGGRS) are enriched in basic and acidic residues. The span at 156–169 (SESEDEDSEDEESE) shows a compositional bias: acidic residues. The CUE 2 domain maps to 175–218 (KQEALLKKLKRKLPDIEKEVLRDILKEHDWDYENALGSLLVFSS). The span at 237–246 (HSKEKTDKIT) shows a compositional bias: basic and acidic residues. Positions 247–263 (QRPSGSSSLSRWLTAAS) are enriched in polar residues. Residues 279–290 (KSALSKSTSKNS) are compositionally biased toward low complexity. Over residues 307-332 (ASEDEDEIDSDVDSMSDDQDSEDEDS) the composition is skewed to acidic residues. The region spanning 460–628 (ILLHQHKLSG…MSLLNFIMPS (169 aa)) is the Helicase ATP-binding domain. Residue 473–480 (DEMGLGKT) coordinates ATP. The DEGH box motif lies at 579–582 (DEGH). Residues 805–966 (LLTKTLAKLK…AITEQMAELL (162 aa)) form the Helicase C-terminal domain.

Belongs to the SNF2/RAD54 helicase family.

The protein resides in the nucleus. It is found in the chromosome. The enzyme catalyses ATP + H2O = ADP + phosphate + H(+). DNA helicase that possesses intrinsic ATP-dependent nucleosome-remodeling activity and is both required for DNA repair and heterochromatin organization. Promotes DNA end resection of double-strand breaks (DSBs) following DNA damage: probably acts by weakening histone DNA interactions in nucleosomes flanking DSBs. Required for the restoration of heterochromatin organization after replication. The chain is SWI/SNF-related matrix-associated actin-dependent regulator of chromatin subfamily A containing DEAD/H box 1A (smarcad1a) from Danio rerio (Zebrafish).